We begin with the raw amino-acid sequence, 219 residues long: Uracil-DNA glycosylase (219 aa).

Aspartate 61 (proton acceptor) is an active-site residue.

The protein belongs to the uracil-DNA glycosylase (UDG) superfamily. UNG family.

It localises to the cytoplasm. It catalyses the reaction Hydrolyzes single-stranded DNA or mismatched double-stranded DNA and polynucleotides, releasing free uracil.. Excises uracil residues from the DNA which can arise as a result of misincorporation of dUMP residues by DNA polymerase or due to deamination of cytosine. The protein is Uracil-DNA glycosylase of Haemophilus influenzae (strain 86-028NP).